The primary structure comprises 357 residues: Eukaryotic translation initiation factor 3 subunit F (357 aa).

Residues 30-169 (VHIQPQAVFS…TKAYISAPVA (140 aa)) enclose the MPN domain. The disordered stretch occupies residues 309-357 (VGGDKEGGEKGKDGEDGGRGGRGGKRGGGGRGGHRGEPREPREPREPAE). 2 stretches are compositionally biased toward basic and acidic residues: residues 311–327 (GDKEGGEKGKDGEDGGR) and 342–357 (HRGEPREPREPREPAE).

It belongs to the eIF-3 subunit F family. In terms of assembly, component of the eukaryotic translation initiation factor 3 (eIF-3) complex.

It is found in the cytoplasm. Component of the eukaryotic translation initiation factor 3 (eIF-3) complex, which is involved in protein synthesis of a specialized repertoire of mRNAs and, together with other initiation factors, stimulates binding of mRNA and methionyl-tRNAi to the 40S ribosome. The eIF-3 complex specifically targets and initiates translation of a subset of mRNAs involved in cell proliferation. This Chaetomium globosum (strain ATCC 6205 / CBS 148.51 / DSM 1962 / NBRC 6347 / NRRL 1970) (Soil fungus) protein is Eukaryotic translation initiation factor 3 subunit F.